Reading from the N-terminus, the 209-residue chain is Large ribosomal subunit protein uL3 (209 aa).

The tract at residues 128–163 is disordered; the sequence is FGGGSRTHGQSDRLRAPGSVGGSSDPSRTFRGTRMA.

The protein belongs to the universal ribosomal protein uL3 family. As to quaternary structure, part of the 50S ribosomal subunit. Forms a cluster with proteins L14 and L19.

One of the primary rRNA binding proteins, it binds directly near the 3'-end of the 23S rRNA, where it nucleates assembly of the 50S subunit. This chain is Large ribosomal subunit protein uL3, found in Chlorobium phaeobacteroides (strain DSM 266 / SMG 266 / 2430).